A 121-amino-acid chain; its full sequence is MGIEEYGGGQGPHSDVLVVTTNDVPGYRVQHVIGEVFGLTVRSRHLGSQIGAGLKSMIGGELKGLTKTLVETRNQAMERLVEQARVRGGNGILMMRFDVTEAADVGTEVCAYGTAVVLVKA.

Belongs to the UPF0145 family.

The protein is UPF0145 protein SAV_4658 of Streptomyces avermitilis (strain ATCC 31267 / DSM 46492 / JCM 5070 / NBRC 14893 / NCIMB 12804 / NRRL 8165 / MA-4680).